An 819-amino-acid polypeptide reads, in one-letter code: DNA replication licensing factor Mcm3 (819 aa).

The MCM domain maps to 290–496; sequence IFELLSKSLA…DVDQMISDHV (207 aa). Positions 348, 388, 389, 390, and 392 each coordinate ADP. The Arginine finger signature appears at 472-475; that stretch reads SRFD. Residue Ser522 is modified to Phosphoserine. Tyr538 is modified (phosphotyrosine). Residues 655–717 are disordered; the sequence is DRPSKRRRNS…DAGDLTRRET (63 aa). Ser664, Ser666, Ser680, and Ser682 each carry phosphoserine. Phosphothreonine is present on residues Thr690 and Thr692. Ser697, Ser735, and Ser739 each carry phosphoserine.

It belongs to the MCM family. As to quaternary structure, component of the Mcm2-7 complex. The complex forms a toroidal hexameric ring with the proposed subunit order Mcm2-Mcm6-Mcm4-Mcm7-Mcm3-Mcm5.

The protein resides in the nucleus. Its subcellular location is the chromosome. It carries out the reaction ATP + H2O = ADP + phosphate + H(+). Functionally, acts as a component of the Mcm2-7 complex (Mcm complex) (Mcm complex) which is the putative replicative helicase essential for 'once per cell cycle' DNA replication initiation and elongation in eukaryotic cells. Core component of CDC45-MCM-GINS (CMG) helicase, the molecular machine that unwinds template DNA during replication, and around which the replisome is built. The active ATPase sites in the Mcm2-7 ring are formed through the interaction surfaces of two neighboring subunits such that a critical structure of a conserved arginine finger motif is provided in trans relative to the ATP-binding site of the Walker A box of the adjacent subunit. The six ATPase active sites, however, are likely to contribute differentially to the complex helicase activity. The polypeptide is DNA replication licensing factor Mcm3 (Mcm3) (Drosophila melanogaster (Fruit fly)).